Reading from the N-terminus, the 1028-residue chain is Contactin-3 (1028 aa).

Positions 1-19 (MMFPWKQLILLSFIGCLGG) are cleaved as a signal peptide. Ig-like C2-type domains are found at residues 26–117 (PVFI…AKLQ), 122–208 (ENFK…ARVL), 227–313 (PKIE…GRLT), 318–402 (PHWV…AELK), 408–497 (PDFS…LVVT), and 499–593 (PTRI…ADLI). Cystine bridges form between Cys-50–Cys-100, Cys-144–Cys-196, Cys-249–Cys-297, Cys-339–Cys-386, and Cys-431–Cys-479. N-linked (GlcNAc...) asparagine glycosylation is found at Asn-65 and Asn-193. 3 N-linked (GlcNAc...) asparagine glycosylation sites follow: Asn-375, Asn-468, and Asn-489. Cys-521 and Cys-577 are oxidised to a cystine. 4 Fibronectin type-III domains span residues 600-698 (PPEN…TEEA), 703-800 (PPSE…SAEE), 805-901 (APSQ…TKKT), and 902-998 (PPSQ…TSMD). Positions 684-713 (GEPSLPSEKVRTEEAVPEVPPSEVNGGGGS) are disordered. N-linked (GlcNAc...) asparagine glycans are attached at residues Asn-765, Asn-860, Asn-895, Asn-913, Asn-931, and Asn-956. A lipid anchor (GPI-anchor amidated serine) is attached at Ser-1002. The propeptide at 1003–1028 (TSAISNVHPMSSYMPIVLFLIVYVLW) is removed in mature form.

The protein belongs to the immunoglobulin superfamily. Contactin family. Interacts with PTPRG. In brain, it is expressed in frontal lobe, occipital lobe, cerebellum and amygdala.

The protein resides in the cell membrane. In terms of biological role, contactins mediate cell surface interactions during nervous system development. Has some neurite outgrowth-promoting activity. This chain is Contactin-3 (CNTN3), found in Homo sapiens (Human).